We begin with the raw amino-acid sequence, 155 residues long: Cytochrome c oxidase subunit 4, mitochondrial (155 aa).

Residues 1-25 constitute a mitochondrion transit peptide; the sequence is MLSLRQSIRFFKPATRTLCSSRYLL. Threonine 55 is modified (phosphothreonine). Zn(2+)-binding residues include cysteine 111, histidine 119, cysteine 134, and cysteine 137.

It belongs to the cytochrome c oxidase subunit 5B family. In terms of assembly, component of the cytochrome c oxidase (complex IV, CIV), a multisubunit enzyme composed of 12 subunits. The complex is composed of a catalytic core of 3 subunits COX1, COX2 and COX3, encoded in the mitochondrial DNA, and 9 supernumerary subunits COX4, COX5A (or COX5B), COX6, COX7, COX8, COX9, COX12, COX13 and COX26, which are encoded in the nuclear genome. The complex exists as a monomer or a dimer and forms supercomplexes (SCs) in the inner mitochondrial membrane with a dimer of ubiquinol-cytochrome c oxidoreductase (cytochrome b-c1 complex, complex III, CIII), resulting in 2 different assemblies (supercomplexes III(2)IV and III(2)IV(2)).

The protein localises to the mitochondrion inner membrane. It functions in the pathway energy metabolism; oxidative phosphorylation. Component of the cytochrome c oxidase, the last enzyme in the mitochondrial electron transport chain which drives oxidative phosphorylation. The respiratory chain contains 3 multisubunit complexes succinate dehydrogenase (complex II, CII), ubiquinol-cytochrome c oxidoreductase (cytochrome b-c1 complex, complex III, CIII) and cytochrome c oxidase (complex IV, CIV), that cooperate to transfer electrons derived from NADH and succinate to molecular oxygen, creating an electrochemical gradient over the inner membrane that drives transmembrane transport and the ATP synthase. Cytochrome c oxidase is the component of the respiratory chain that catalyzes the reduction of oxygen to water. Electrons originating from reduced cytochrome c in the intermembrane space (IMS) are transferred via the dinuclear copper A center (CU(A)) of COX2 and heme A of COX1 to the active site in COX1, a binuclear center (BNC) formed by heme A3 and copper B (CU(B)). The BNC reduces molecular oxygen to 2 water molecules using 4 electrons from cytochrome c in the IMS and 4 protons from the mitochondrial matrix. The chain is Cytochrome c oxidase subunit 4, mitochondrial (COX4) from Saccharomyces cerevisiae (strain ATCC 204508 / S288c) (Baker's yeast).